A 212-amino-acid chain; its full sequence is Orotate phosphoribosyltransferase (212 aa).

Residues R97, K101, H103, and E123–S131 each bind 5-phospho-alpha-D-ribose 1-diphosphate. Position 127 (S127) interacts with orotate.

It belongs to the purine/pyrimidine phosphoribosyltransferase family. PyrE subfamily. In terms of assembly, homodimer. It depends on Mg(2+) as a cofactor.

The enzyme catalyses orotidine 5'-phosphate + diphosphate = orotate + 5-phospho-alpha-D-ribose 1-diphosphate. It participates in pyrimidine metabolism; UMP biosynthesis via de novo pathway; UMP from orotate: step 1/2. Functionally, catalyzes the transfer of a ribosyl phosphate group from 5-phosphoribose 1-diphosphate to orotate, leading to the formation of orotidine monophosphate (OMP). The protein is Orotate phosphoribosyltransferase of Bacteroides thetaiotaomicron (strain ATCC 29148 / DSM 2079 / JCM 5827 / CCUG 10774 / NCTC 10582 / VPI-5482 / E50).